A 73-amino-acid chain; its full sequence is uncharacterized protein (73 aa).

The segment at 1–32 (MFLSSAVRKDSNGVRHLPSVQRWTPGSPPTRA) is disordered.

This is an uncharacterized protein from Frog virus 3 (isolate Goorha) (FV-3).